The chain runs to 250 residues: MGRGRVELKRIENKINRQVTFAKRRNGLLKKAYELSILCDAEVALIIFSSRGKLYEFSSASSMMTTLEKYQQCSYASLDPMLPVSDTQMNYNEYVRLKARVELLQRSQRHILGEDLGTLNSKELEQLEHQLDASLKKVRSKKTQSMLDQLADLQEKEQMLEEANKQLKNKLEESAARIPLGLSWGNNGGQTMEYNRLPPQTTAQPFFQPLRLNSSSPQFGYNPNMGANDHEVNAATTAHNINGFIPGWML.

In terms of domain architecture, MADS-box spans 1-61 (MGRGRVELKR…GKLYEFSSAS (61 aa)). In terms of domain architecture, K-box spans 87–177 (TQMNYNEYVR…KNKLEESAAR (91 aa)).

It localises to the nucleus. Functionally, MADS-box transcription factor that acts redundantly with EJ2 to control meristem maturation and inflorescence architecture. In Solanum lycopersicum (Tomato), this protein is MADS-box protein J2.